A 342-amino-acid polypeptide reads, in one-letter code: L-threonine 3-dehydrogenase (342 aa).

C38 is a Zn(2+) binding site. Residues T40 and H43 each act as charge relay system in the active site. H63, E64, C93, C96, C99, and C107 together coordinate Zn(2+). NAD(+)-binding positions include I175, D195, R200, 262–264 (LGI), and 286–287 (IY).

This sequence belongs to the zinc-containing alcohol dehydrogenase family. As to quaternary structure, homotetramer. The cofactor is Zn(2+).

It localises to the cytoplasm. It catalyses the reaction L-threonine + NAD(+) = (2S)-2-amino-3-oxobutanoate + NADH + H(+). It participates in amino-acid degradation; L-threonine degradation via oxydo-reductase pathway; glycine from L-threonine: step 1/2. Functionally, catalyzes the NAD(+)-dependent oxidation of L-threonine to 2-amino-3-ketobutyrate. This Paraburkholderia phymatum (strain DSM 17167 / CIP 108236 / LMG 21445 / STM815) (Burkholderia phymatum) protein is L-threonine 3-dehydrogenase.